A 785-amino-acid polypeptide reads, in one-letter code: Transcription factor Sp1 (785 aa).

A disordered region spans residues 1-93; that stretch reads MSDQDHSMDE…PSQSGGTGEL (93 aa). N-acetylserine is present on serine 2. Phosphoserine is present on residues serine 2 and serine 7. The interval 2 to 82 is repressor domain; sequence SDQDHSMDEM…SPNENSNNSQ (81 aa). Residue lysine 16 forms a Glycyl lysine isopeptide (Lys-Gly) (interchain with G-Cter in SUMO); alternate linkage. Lysine 16 participates in a covalent cross-link: Glycyl lysine isopeptide (Lys-Gly) (interchain with G-Cter in SUMO2); alternate. Residues 20-34 are compositionally biased toward gly residues; that stretch reads GVGGNNGGNGNGGGA. At serine 59 the chain carries Phosphoserine. Over residues 72–85 the composition is skewed to low complexity; sequence ESPNENSNNSQGPS. Serine 101 is subject to Phosphoserine; by ATM. Positions 109–123 are enriched in polar residues; that stretch reads IISSSSGATPTSKEQ. The disordered stretch occupies residues 109 to 141; sequence IISSSSGATPTSKEQSGSSTNGSNGSESSKNRT. Low complexity predominate over residues 124–136; the sequence is SGSSTNGSNGSES. The tract at residues 146 to 251 is transactivation domain A (Gln-rich); it reads QYVVAAAPNL…ANNVLSGQTQ (106 aa). Residues 261–495 form a transactivation domain B (Gln-rich) region; the sequence is NGNITLLPVN…PMQGVSLGQT (235 aa). Threonine 278 bears the Phosphothreonine; by MAPK8 mark. The tract at residues 329 to 395 is disordered; the sequence is TTTTTSNMGI…KEGEQNQQTQ (67 aa). A compositionally biased stretch (low complexity) spans 342-357; it reads TTSGSSGTNSQGQTPQ. The segment covering 358–379 has biased composition (polar residues); it reads RVSGLQGSDALNIQQNQTSGGS. Residues 381–395 are compositionally biased toward low complexity; the sequence is QAGQQKEGEQNQQTQ. A Phosphothreonine; by MAPK1 and MAPK3 modification is found at threonine 453. The 9aaTAD motif lies at 462–470; the sequence is VSWQTLQLQ. Serine 491 is a glycosylation site (O-linked (GlcNAc) serine). The interval 496–610 is transactivation domain C (highly charged); it reads SSSNTTLTPI…REACTCPYCK (115 aa). The disordered stretch occupies residues 567 to 598; sequence LHGAGGDGIHDDTAGGEEGENSPDAQPQAGRR. Residue serine 612 is modified to Phosphoserine; alternate. Residue serine 612 is glycosylated (O-linked (GlcNAc) serine; alternate). The interval 619–785 is VZV IE62-binding; it reads DPGKKKQHIC…QSINISGNGF (167 aa). The C2H2-type 1 zinc finger occupies 626 to 650; the sequence is HICHIQGCGKVYGKTSHLRAHLRWH. Threonine 640 is subject to Phosphothreonine; alternate. O-linked (GlcNAc) threonine; alternate glycosylation is present at threonine 640. An O-linked (GlcNAc) serine; alternate glycan is attached at serine 641. Position 641 is a phosphoserine; by PKC/PRKCZ; alternate (serine 641). Threonine 651 is subject to Phosphothreonine; by PKC/PRKCZ. The C2H2-type 2 zinc finger occupies 656–680; the sequence is FMCTWSYCGKRFTRSDELQRHKRTH. A Phosphothreonine modification is found at threonine 668. Serine 670 bears the Phosphoserine; by PKC/PRKCZ mark. Threonine 681 is subject to Phosphothreonine; by PKC/PRKCZ. The C2H2-type 3 zinc-finger motif lies at 686-708; the sequence is FACPECPKRFMRSDHLSKHIKTH. Residues serine 698 and serine 702 each carry the phosphoserine; alternate modification. 2 O-linked (GlcNAc) serine; alternate glycosylation sites follow: serine 698 and serine 702. Lysine 703 is modified (N6-acetyllysine). Positions 708-785 are domain D; it reads HQNKKGGPGV…QSINISGNGF (78 aa). Threonine 739 is modified (phosphothreonine; by MAPK1, MAPK3 and MAPK8).

It belongs to the Sp1 C2H2-type zinc-finger protein family. In terms of assembly, interacts with ATF7IP, ATF7IP2, BAHD1, POGZ, HCFC1, AATF and PHC2. Interacts with HLTF; the interaction may be required for basal transcriptional activity of HLTF. Interacts (deacetylated form) with EP300; the interaction enhances gene expression. Interacts with HDAC1 and JUN. Interacts with ELF1; the interaction is inhibited by glycosylation of SP1. Interaction with NFYA; the interaction is inhibited by glycosylation of SP1. Interacts with ATF7IP and TBP. Interacts with MEIS2 isoform 4 and PBX1 isoform PBX1a. Interacts with EGR1. Interacts with SMARCA4/BRG1. Interacts with RNF112 in an oxidative stress-regulated manner. Interacts with ZBTB7A; ZBTB7A prevents the binding to GC-rich motifs in promoters and represses the transcriptional activity of SP1. Interacts with DDX3X; this interaction potentiates SP1-induced CDKN1A/WAF1/CIP1 transcription. Interacts with MSX1; the interaction may inhibit MSX1 autoinactivation. (Microbial infection) Interacts with varicella-zoster virus IE62 protein. As to quaternary structure, (Microbial infection) Interacts with SV40 VP2/3 proteins. Interacts with SV40 major capsid protein VP1; this interaction leads to a cooperativity between the 2 proteins in DNA binding. In terms of assembly, (Microbial infection) Interacts with HIV-1 Vpr; the interaction is inhibited by SP1 O-glycosylation. Post-translationally, phosphorylated on multiple serine and threonine residues. Phosphorylation is coupled to ubiquitination, sumoylation and proteolytic processing. Phosphorylation on Ser-59 enhances proteolytic cleavage. Phosphorylation on Ser-7 enhances ubiquitination and protein degradation. Hyperphosphorylation on Ser-101 in response to DNA damage has no effect on transcriptional activity. MAPK1/MAPK3-mediated phosphorylation on Thr-453 and Thr-739 enhances VEGF transcription but, represses FGF2-triggered PDGFR-alpha transcription. Also implicated in the repression of RECK by ERBB2. Hyperphosphorylated on Thr-278 and Thr-739 during mitosis by MAPK8 shielding SP1 from degradation by the ubiquitin-dependent pathway. Phosphorylated in the zinc-finger domain by calmodulin-activated PKCzeta. Phosphorylation on Ser-641 by PKCzeta is critical for TSA-activated LHR gene expression through release of its repressor, p107. Phosphorylation on Thr-668, Ser-670 and Thr-681 is stimulated by angiotensin II via the AT1 receptor inducing increased binding to the PDGF-D promoter. This phosphorylation is increased in injured artey wall. Ser-59 and Thr-681 can both be dephosphorylated by PP2A during cell-cycle interphase. Dephosphorylation on Ser-59 leads to increased chromatin association during interphase and increases the transcriptional activity. On insulin stimulation, sequentially glycosylated and phosphorylated on several C-terminal serine and threonine residues. In terms of processing, acetylated. Acetylation/deacetylation events affect transcriptional activity. Deacetylation leads to an increase in the expression of the 12(s)-lipooxygenase gene through recruitment of p300 to the promoter. Deacetylated by HDAC6 which leads to increased expression of ENG and positive regulation of angiogenesis. Ubiquitinated. Ubiquitination occurs on the C-terminal proteolytically-cleaved peptide and is triggered by phosphorylation. Post-translationally, sumoylated with SUMO1. Sumoylation modulates proteolytic cleavage of the N-terminal repressor domain. Sumoylation levels are attenuated during tumorigenesis. Phosphorylation mediates SP1 desumoylation. In terms of processing, proteolytic cleavage in the N-terminal repressor domain is prevented by sumoylation. The C-terminal cleaved product is susceptible to degradation. O-glycosylated; Contains 8 N-acetylglucosamine side chains. Levels are controlled by insulin and the SP1 phosphorylation states. Insulin-mediated O-glycosylation locates SP1 to the nucleus, where it is sequentially deglycosylated and phosphorylated. O-glycosylation affects transcriptional activity through disrupting the interaction with a number of transcription factors including ELF1 and NFYA. Also inhibits interaction with the HIV1 promoter. Inhibited by peroxisomome proliferator receptor gamma (PPARgamma). Up-regulated in adenocarcinomas of the stomach (at protein level). Isoform 3 is ubiquitously expressed at low levels.

It is found in the nucleus. The protein resides in the cytoplasm. In terms of biological role, transcription factor that can activate or repress transcription in response to physiological and pathological stimuli. Binds with high affinity to GC-rich motifs and regulates the expression of a large number of genes involved in a variety of processes such as cell growth, apoptosis, differentiation and immune responses. Highly regulated by post-translational modifications (phosphorylations, sumoylation, proteolytic cleavage, glycosylation and acetylation). Also binds the PDGFR-alpha G-box promoter. May have a role in modulating the cellular response to DNA damage. Implicated in chromatin remodeling. Plays an essential role in the regulation of FE65 gene expression. In complex with ATF7IP, maintains telomerase activity in cancer cells by inducing TERT and TERC gene expression. Isoform 3 is a stronger activator of transcription than isoform 1. Positively regulates the transcription of the core clock component BMAL1. Plays a role in the recruitment of SMARCA4/BRG1 on the c-FOS promoter. Plays a role in protecting cells against oxidative stress following brain injury by regulating the expression of RNF112. The sequence is that of Transcription factor Sp1 (SP1) from Homo sapiens (Human).